We begin with the raw amino-acid sequence, 658 residues long: ATP-dependent zinc metalloprotease FtsH 4 (658 aa).

The interval M1–G22 is disordered. The Cytoplasmic segment spans residues M1–T28. Residues W29 to P49 traverse the membrane as a helical segment. At S50–S149 the chain is on the extracellular side. The disordered stretch occupies residues Q95–T114. The helical transmembrane segment at V150 to Y170 threads the bilayer. Residues L171–V658 are Cytoplasmic-facing. ATP is bound at residue G243–T250. H464 is a Zn(2+) binding site. The active site involves E465. Zn(2+) is bound by residues H468 and D540.

This sequence in the central section; belongs to the AAA ATPase family. It in the C-terminal section; belongs to the peptidase M41 family. In terms of assembly, homohexamer. It depends on Zn(2+) as a cofactor.

The protein localises to the cell membrane. Its function is as follows. Acts as a processive, ATP-dependent zinc metallopeptidase for both cytoplasmic and membrane proteins. Plays a role in the quality control of integral membrane proteins. The chain is ATP-dependent zinc metalloprotease FtsH 4 (ftsh4) from Sphaerobacter thermophilus (strain ATCC 49802 / DSM 20745 / KCCM 41009 / NCIMB 13125 / S 6022).